The sequence spans 485 residues: Cobyric acid synthase (485 aa).

Residues 249 to 437 form the GATase cobBQ-type domain; it reads HLKIRVPVWQ…WHGLFSQPSA (189 aa). The Nucleophile role is filled by Cys-330. The active site involves His-429.

Belongs to the CobB/CobQ family. CobQ subfamily.

It functions in the pathway cofactor biosynthesis; adenosylcobalamin biosynthesis. In terms of biological role, catalyzes amidations at positions B, D, E, and G on adenosylcobyrinic A,C-diamide. NH(2) groups are provided by glutamine, and one molecule of ATP is hydrogenolyzed for each amidation. The sequence is that of Cobyric acid synthase from Saccharophagus degradans (strain 2-40 / ATCC 43961 / DSM 17024).